A 485-amino-acid polypeptide reads, in one-letter code: Aspartyl/glutamyl-tRNA(Asn/Gln) amidotransferase subunit B (485 aa).

It belongs to the GatB/GatE family. GatB subfamily. Heterotrimer of A, B and C subunits.

It carries out the reaction L-glutamyl-tRNA(Gln) + L-glutamine + ATP + H2O = L-glutaminyl-tRNA(Gln) + L-glutamate + ADP + phosphate + H(+). It catalyses the reaction L-aspartyl-tRNA(Asn) + L-glutamine + ATP + H2O = L-asparaginyl-tRNA(Asn) + L-glutamate + ADP + phosphate + 2 H(+). Allows the formation of correctly charged Asn-tRNA(Asn) or Gln-tRNA(Gln) through the transamidation of misacylated Asp-tRNA(Asn) or Glu-tRNA(Gln) in organisms which lack either or both of asparaginyl-tRNA or glutaminyl-tRNA synthetases. The reaction takes place in the presence of glutamine and ATP through an activated phospho-Asp-tRNA(Asn) or phospho-Glu-tRNA(Gln). The chain is Aspartyl/glutamyl-tRNA(Asn/Gln) amidotransferase subunit B from Opitutus terrae (strain DSM 11246 / JCM 15787 / PB90-1).